The primary structure comprises 284 residues: Deoxyribonuclease-1 (284 aa).

Residues 1–22 form the signal peptide; it reads MRYTGLMGTLLTLVNLLQLAGT. N40 is a glycosylation site (N-linked (GlcNAc...) asparagine). E100 is an active-site residue. An intrachain disulfide couples C123 to C126. N128 carries an N-linked (GlcNAc...) asparagine glycan. H156 is an active-site residue. A disulfide bond links C195 and C231.

The protein belongs to the DNase I family. The cofactor is Ca(2+). Requires Mg(2+) as cofactor. In terms of processing, N-glycosylated. In terms of tissue distribution, highly expressed in the parotid and submandibular gland as well as in the kidney and duodenum (at protein level). Expressed at intermediate level in the ileum, mesenterial lymph nodes, liver, ventral prostate, epididymis, ovary and stomach (at protein level). Expressed at low level in the sublingual, preputial, coagulation and pituitary gland (at protein level). Also present in the lachrymal and thyroid glands, striated muscle, intestine, the urinary bladder and the eye.

It localises to the secreted. It is found in the zymogen granule. The protein localises to the nucleus envelope. The catalysed reaction is Endonucleolytic cleavage to 5'-phosphodinucleotide and 5'-phosphooligonucleotide end-products.. In terms of biological role, serum endocuclease secreted into body fluids by a wide variety of exocrine and endocrine organs. Expressed by non-hematopoietic tissues and preferentially cleaves protein-free DNA. Among other functions, seems to be involved in cell death by apoptosis. Binds specifically to G-actin and blocks actin polymerization. Together with DNASE1L3, plays a key role in degrading neutrophil extracellular traps (NETs). NETs are mainly composed of DNA fibers and are released by neutrophils to bind pathogens during inflammation. Degradation of intravascular NETs by DNASE1 and DNASE1L3 is required to prevent formation of clots that obstruct blood vessels and cause organ damage following inflammation. The sequence is that of Deoxyribonuclease-1 from Mus musculus (Mouse).